The chain runs to 515 residues: UBP3-associated protein BRE5 (515 aa).

The 133-residue stretch at 8 to 140 (ICFAFLQNYY…FDITNDIIRF (133 aa)) folds into the NTF2 domain. The segment covering 157 to 166 (QSNEENSVSA) has biased composition (low complexity). Disordered stretches follow at residues 157–410 (QSNE…PVFS) and 485–515 (KTVK…KRKD). Residues 168–201 (EEDKIRHESGVEKEKEKEKSPEISKPKAKKETVK) are compositionally biased toward basic and acidic residues. Ser-187 carries the phosphoserine modification. Polar residues predominate over residues 202–213 (DTTAPTESSTQE). Basic and acidic residues-rich tracts occupy residues 262-282 (LNEK…KEGS) and 299-319 (EVSD…EIKP). Ser-282 is subject to Phosphoserine. Positions 330 to 341 (SGNNASTPSSSP) are enriched in polar residues. Thr-336 carries the post-translational modification Phosphothreonine. Ser-340 carries the phosphoserine modification. Over residues 374–396 (IRPETLPKKPTERKFEMGNRRDN) the composition is skewed to basic and acidic residues. The residue at position 398 (Ser-398) is a Phosphoserine. The 77-residue stretch at 418 to 494 (YPIYIRGTNG…KTVKKPTSNN (77 aa)) folds into the RRM domain. Over residues 489 to 503 (KPTSNNPPGIFTNGT) the composition is skewed to polar residues. Over residues 504–515 (RSHRKQPLKRKD) the composition is skewed to basic residues.

In terms of assembly, heterotetramer with UBP3; contains two molecules of BRE5 and two molecules of UBP3. Forms a complex composed of CDC48, DOA1, deubiquitinase UBP3 and probably BRE5. Within the complex, interacts (via C-terminus) with CDC48; the interaction is direct and UBP3-independent.

Functionally, has a role in de-ubiquitination. In conjunction with UBP3, cleaves ubiquitin, leading to the subsequent mono-ubiquitination of sec23. This chain is UBP3-associated protein BRE5 (BRE5), found in Saccharomyces cerevisiae (strain ATCC 204508 / S288c) (Baker's yeast).